The primary structure comprises 364 residues: UDP-N-acetylenolpyruvoylglucosamine reductase (364 aa).

The FAD-binding PCMH-type domain maps to 30-196 (LGGPATRLIT…LRVRFELEDA (167 aa)). Residue Arg-173 is part of the active site. Ser-252 acts as the Proton donor in catalysis. The active site involves Glu-356.

Belongs to the MurB family. Requires FAD as cofactor.

It is found in the cytoplasm. The enzyme catalyses UDP-N-acetyl-alpha-D-muramate + NADP(+) = UDP-N-acetyl-3-O-(1-carboxyvinyl)-alpha-D-glucosamine + NADPH + H(+). The protein operates within cell wall biogenesis; peptidoglycan biosynthesis. In terms of biological role, cell wall formation. The sequence is that of UDP-N-acetylenolpyruvoylglucosamine reductase from Streptomyces avermitilis (strain ATCC 31267 / DSM 46492 / JCM 5070 / NBRC 14893 / NCIMB 12804 / NRRL 8165 / MA-4680).